Reading from the N-terminus, the 151-residue chain is MKLTYKMASLLKYALRLTREYKENIIPHFDHLTRLRDLIDGMIKSEDVQRFNRTNRNDLISACMQINVRTYMPNATIDMRKQPNCIYFRICQYCHLEADVPSPDDHSVYRYLCVACGTPLVIDHPLDVFGHTEEGVNELLEVQRVNAGGEL.

This is an uncharacterized protein from Lepidoptera (butterflies and moths).